A 173-amino-acid chain; its full sequence is MPDLKSLIREVPDFPKPGILFYDITTLLKDPSGFHGVIDGLKDHYRDIKVDTVLGIEARGFIFAPALAYALGAGFVPVRKPKKLPAECVRITYDLEYGTDTLEMHKDAIGNGHRVLIVDDLLATGGTASAAARMVQDAGGIVVGLGFVIELTFLAGRQRLNGHDVFSLLQYDK.

This sequence belongs to the purine/pyrimidine phosphoribosyltransferase family. Homodimer.

The protein localises to the cytoplasm. It catalyses the reaction AMP + diphosphate = 5-phospho-alpha-D-ribose 1-diphosphate + adenine. Its pathway is purine metabolism; AMP biosynthesis via salvage pathway; AMP from adenine: step 1/1. Its function is as follows. Catalyzes a salvage reaction resulting in the formation of AMP, that is energically less costly than de novo synthesis. This chain is Adenine phosphoribosyltransferase, found in Solibacter usitatus (strain Ellin6076).